Reading from the N-terminus, the 313-residue chain is Pyrimidine-specific ribonucleoside hydrolase RihB (313 aa).

The Proton acceptor role is filled by D11. Residues D11, D16, and V124 each contribute to the Ca(2+) site. The substrate site is built by Q227 and H239. Position 240 (D240) interacts with Ca(2+).

It belongs to the IUNH family. RihB subfamily. As to quaternary structure, homotetramer. Ca(2+) serves as cofactor.

It carries out the reaction a pyrimidine ribonucleoside + H2O = a pyrimidine nucleobase + D-ribose. Hydrolyzes cytidine or uridine to ribose and cytosine or uracil, respectively. Has a clear preference for cytidine over uridine. Strictly specific for ribonucleosides. The protein is Pyrimidine-specific ribonucleoside hydrolase RihB of Escherichia coli O1:K1 / APEC.